Reading from the N-terminus, the 218-residue chain is Replication protein RepB (218 aa).

Positions 1–26 (MKSESKIDWTVPRPNKNPKTKQPYKR) are disordered. Residues 16–26 (KNPKTKQPYKR) show a composition bias toward basic residues.

The protein belongs to the Gram-positive plasmids replication protein type 2 family.

Functionally, is essential for plasmid replication. Nicks the positive strand at the plus origin of replication. This is Replication protein RepB (repB) from Lactiplantibacillus plantarum (Lactobacillus plantarum).